The primary structure comprises 379 residues: MVIGCCTLNNISEDAKTRSDANKQIEKLIEKEKKNFKSTHRLLLLGAGESGKSTIVKQMRILHIDGFSEREKKEKIDAIRKNLRDAICSIAGAMGSLKPPVKLELSENRKLRDYILETASKPDFDYPPEFFTYCAKLWKDGGIQETFERSNEYQLIDCAKYFLDKALEVGAPNYIPSEQDILRCRVLTSGIFETKFSVDKVNFHMFDVGGQREERRKWIQCFNDVTAIIFVAACSSYNMVLREDPSQNRVKESLELLASIWNNRWLRNISVILFLNKQDLLTEKVLAGKSKIEVYFPHYATYQAPADTLAEYRHENSEVVRARFFFRDEFLKVTSNNNGGRHYCYPHLTCAVDTENIRRVFNDCRDIIQRMHLRQYELL.

A G-alpha domain is found at 38–379; sequence STHRLLLLGA…RMHLRQYELL (342 aa). The tract at residues 41–54 is G1 motif; the sequence is RLLLLGAGESGKST. GTP is bound by residues 46–53, 182–188, 207–211, 276–279, and Ala351; these read GAGESGKS, LRCRVLT, DVGGQ, and NKQD. Mg(2+) is bound by residues Ser53 and Thr188. Residues 180 to 188 form a G2 motif region; it reads DILRCRVLT. The interval 203–212 is G3 motif; that stretch reads FHMFDVGGQR. Residues 272 to 279 form a G4 motif region; it reads ILFLNKQD. A G5 motif region spans residues 349–354; sequence TCAVDT.

The protein belongs to the G-alpha family. G(s) subfamily. G proteins are composed of 3 units; alpha, beta and gamma. The alpha chain contains the guanine nucleotide binding site.

Guanine nucleotide-binding proteins (G proteins) are involved as modulators or transducers in various transmembrane signaling systems. The G(s) protein is involved in hormonal regulation of adenylate cyclase: it activates the cyclase in response to beta-adrenergic stimuli. In Schistosoma mansoni (Blood fluke), this protein is Guanine nucleotide-binding protein G(s) subunit alpha.